Here is a 502-residue protein sequence, read N- to C-terminus: Reduced meiotic recombination protein C1442.04c (502 aa).

Residues serine 328, serine 330, and serine 331 each carry the phosphoserine modification. Disordered stretches follow at residues 353 to 391, 420 to 440, and 454 to 502; these read NDLN…LRDN, GSLN…ENVD, and ESAF…PSDD. Acidic residues predominate over residues 367–378; that stretch reads DGSEIITLDEND. 2 stretches are compositionally biased toward polar residues: residues 420–436 and 462–477; these read GSLN…TNDG and GTIN…TTDT.

Belongs to the RMR1 family.

Its subcellular location is the cytoplasm. It localises to the nucleus. Its function is as follows. Required for normal levels of gene conversion events during meiosis. The protein is Reduced meiotic recombination protein C1442.04c of Schizosaccharomyces pombe (strain 972 / ATCC 24843) (Fission yeast).